We begin with the raw amino-acid sequence, 205 residues long: Methylthioribulose-1-phosphate dehydratase (205 aa).

2 residues coordinate Zn(2+): histidine 94 and histidine 96.

It belongs to the aldolase class II family. MtnB subfamily. Zn(2+) serves as cofactor.

It catalyses the reaction 5-(methylsulfanyl)-D-ribulose 1-phosphate = 5-methylsulfanyl-2,3-dioxopentyl phosphate + H2O. It participates in amino-acid biosynthesis; L-methionine biosynthesis via salvage pathway; L-methionine from S-methyl-5-thio-alpha-D-ribose 1-phosphate: step 2/6. Functionally, catalyzes the dehydration of methylthioribulose-1-phosphate (MTRu-1-P) into 2,3-diketo-5-methylthiopentyl-1-phosphate (DK-MTP-1-P). The chain is Methylthioribulose-1-phosphate dehydratase from Pectobacterium atrosepticum (strain SCRI 1043 / ATCC BAA-672) (Erwinia carotovora subsp. atroseptica).